The following is a 117-amino-acid chain: Chondroitin proteoglycan 7 (117 aa).

The signal sequence occupies residues 1–19 (MQTITLLALLACIAVPIFA). The disordered stretch occupies residues 31-97 (VEASGEGSGE…SGENLSNGIV (67 aa)). Low complexity-rich tracts occupy residues 32-41 (EASGEGSGES) and 48-57 (ESSGEGSGES). Residues serine 66, serine 70, serine 74, serine 84, and serine 88 are each glycosylated (O-linked (Xyl...) (chondroitin sulfate) serine). Positions 75 to 95 (GASDAVLESSGEGSGENLSNG) are enriched in low complexity. Asparagine 91 carries N-linked (GlcNAc...) asparagine glycosylation.

The polypeptide is Chondroitin proteoglycan 7 (cpg-7) (Caenorhabditis briggsae).